A 341-amino-acid chain; its full sequence is Phenylalanine--tRNA ligase alpha subunit (341 aa).

Glu255 serves as a coordination point for Mg(2+).

Belongs to the class-II aminoacyl-tRNA synthetase family. Phe-tRNA synthetase alpha subunit type 1 subfamily. In terms of assembly, tetramer of two alpha and two beta subunits. Mg(2+) serves as cofactor.

It localises to the cytoplasm. The catalysed reaction is tRNA(Phe) + L-phenylalanine + ATP = L-phenylalanyl-tRNA(Phe) + AMP + diphosphate + H(+). The polypeptide is Phenylalanine--tRNA ligase alpha subunit (Natranaerobius thermophilus (strain ATCC BAA-1301 / DSM 18059 / JW/NM-WN-LF)).